Reading from the N-terminus, the 157-residue chain is Probable succinate transporter subunit YjjB (157 aa).

4 helical membrane-spanning segments follow: residues 6–26 (IILT…GFAM), 51–71 (VLMI…ILVG), 87–107 (VFTV…VAMI), and 129–149 (FLKA…PGLW).

It belongs to the ThrE exporter (TC 2.A.79) family. As to quaternary structure, the transporter is composed of YjjB and YjjP.

It localises to the cell inner membrane. Its function is as follows. Involved in succinate export with YjjP. Both proteins are required for export. This is Probable succinate transporter subunit YjjB from Proteus mirabilis (strain HI4320).